We begin with the raw amino-acid sequence, 439 residues long: Adenylosuccinate synthetase (439 aa).

GTP-binding positions include 14 to 20 and 42 to 44; these read GDEGKGK and GHT. D15 (proton acceptor) is an active-site residue. 2 residues coordinate Mg(2+): D15 and G42. IMP contacts are provided by residues 15 to 18, 40 to 43, T130, R144, Q225, T240, and R304; these read DEGK and NAGH. H43 acts as the Proton donor in catalysis. 300 to 306 contacts substrate; it reads TTTGRRR. GTP-binding positions include R306, 332–334, and 414–416; these read KLD and SLG.

Belongs to the adenylosuccinate synthetase family. As to quaternary structure, homodimer. Requires Mg(2+) as cofactor.

It localises to the cytoplasm. The catalysed reaction is IMP + L-aspartate + GTP = N(6)-(1,2-dicarboxyethyl)-AMP + GDP + phosphate + 2 H(+). The protein operates within purine metabolism; AMP biosynthesis via de novo pathway; AMP from IMP: step 1/2. Functionally, plays an important role in the de novo pathway of purine nucleotide biosynthesis. Catalyzes the first committed step in the biosynthesis of AMP from IMP. The protein is Adenylosuccinate synthetase of Synechococcus sp. (strain CC9902).